The primary structure comprises 235 residues: Phosphoribosylformylglycinamidine synthase subunit PurQ (235 aa).

Residues Phe-3 to Thr-234 form the Glutamine amidotransferase type-1 domain. Residue Cys-86 is the Nucleophile of the active site. Residues His-203 and Glu-205 contribute to the active site.

In terms of assembly, part of the FGAM synthase complex composed of 1 PurL, 1 PurQ and 2 PurS subunits.

The protein localises to the cytoplasm. The enzyme catalyses N(2)-formyl-N(1)-(5-phospho-beta-D-ribosyl)glycinamide + L-glutamine + ATP + H2O = 2-formamido-N(1)-(5-O-phospho-beta-D-ribosyl)acetamidine + L-glutamate + ADP + phosphate + H(+). It carries out the reaction L-glutamine + H2O = L-glutamate + NH4(+). It participates in purine metabolism; IMP biosynthesis via de novo pathway; 5-amino-1-(5-phospho-D-ribosyl)imidazole from N(2)-formyl-N(1)-(5-phospho-D-ribosyl)glycinamide: step 1/2. Part of the phosphoribosylformylglycinamidine synthase complex involved in the purines biosynthetic pathway. Catalyzes the ATP-dependent conversion of formylglycinamide ribonucleotide (FGAR) and glutamine to yield formylglycinamidine ribonucleotide (FGAM) and glutamate. The FGAM synthase complex is composed of three subunits. PurQ produces an ammonia molecule by converting glutamine to glutamate. PurL transfers the ammonia molecule to FGAR to form FGAM in an ATP-dependent manner. PurS interacts with PurQ and PurL and is thought to assist in the transfer of the ammonia molecule from PurQ to PurL. This chain is Phosphoribosylformylglycinamidine synthase subunit PurQ, found in Acaryochloris marina (strain MBIC 11017).